The primary structure comprises 213 residues: Triosephosphate isomerase (213 aa).

7–9 serves as a coordination point for substrate; it reads NLK. Catalysis depends on His88, which acts as the Electrophile. Glu136 functions as the Proton acceptor in the catalytic mechanism. Residues Ile141 and Gly174 each contribute to the substrate site.

The protein belongs to the triosephosphate isomerase family. Homotetramer; dimer of dimers.

It is found in the cytoplasm. It carries out the reaction D-glyceraldehyde 3-phosphate = dihydroxyacetone phosphate. Its pathway is carbohydrate biosynthesis; gluconeogenesis. It participates in carbohydrate degradation; glycolysis; D-glyceraldehyde 3-phosphate from glycerone phosphate: step 1/1. Functionally, involved in the gluconeogenesis. Catalyzes stereospecifically the conversion of dihydroxyacetone phosphate (DHAP) to D-glyceraldehyde-3-phosphate (G3P). In Thermoplasma volcanium (strain ATCC 51530 / DSM 4299 / JCM 9571 / NBRC 15438 / GSS1), this protein is Triosephosphate isomerase.